The chain runs to 66 residues: UPF0391 membrane protein AM1_5042 (66 aa).

A run of 2 helical transmembrane segments spans residues Leu-4 to Ala-24 and Ala-28 to Pro-47.

It belongs to the UPF0391 family.

It localises to the cell membrane. The chain is UPF0391 membrane protein AM1_5042 from Acaryochloris marina (strain MBIC 11017).